A 476-amino-acid chain; its full sequence is Bifunctional protein GlmU (476 aa).

Residues 1 to 232 (MGDLAAIILA…PVEVMGVNDR (232 aa)) are pyrophosphorylase. UDP-N-acetyl-alpha-D-glucosamine contacts are provided by residues 9–12 (LAAG), K23, Q75, and 80–81 (GT). A Mg(2+)-binding site is contributed by D105. UDP-N-acetyl-alpha-D-glucosamine-binding residues include G142, E157, N172, and N230. N230 lines the Mg(2+) pocket. The segment at 233–253 (AQLAEAGRFARQRINRELMLD) is linker. The interval 254 to 476 (GVTIVDPAAT…DGWKLKQRDQ (223 aa)) is N-acetyltransferase. Residues R353 and K371 each coordinate UDP-N-acetyl-alpha-D-glucosamine. Catalysis depends on H383, which acts as the Proton acceptor. The UDP-N-acetyl-alpha-D-glucosamine site is built by Y386 and N397. Acetyl-CoA-binding positions include 406 to 407 (NY), S425, A443, and R460.

This sequence in the N-terminal section; belongs to the N-acetylglucosamine-1-phosphate uridyltransferase family. In the C-terminal section; belongs to the transferase hexapeptide repeat family. As to quaternary structure, homotrimer. Requires Mg(2+) as cofactor.

Its subcellular location is the cytoplasm. The catalysed reaction is alpha-D-glucosamine 1-phosphate + acetyl-CoA = N-acetyl-alpha-D-glucosamine 1-phosphate + CoA + H(+). It carries out the reaction N-acetyl-alpha-D-glucosamine 1-phosphate + UTP + H(+) = UDP-N-acetyl-alpha-D-glucosamine + diphosphate. The protein operates within nucleotide-sugar biosynthesis; UDP-N-acetyl-alpha-D-glucosamine biosynthesis; N-acetyl-alpha-D-glucosamine 1-phosphate from alpha-D-glucosamine 6-phosphate (route II): step 2/2. Its pathway is nucleotide-sugar biosynthesis; UDP-N-acetyl-alpha-D-glucosamine biosynthesis; UDP-N-acetyl-alpha-D-glucosamine from N-acetyl-alpha-D-glucosamine 1-phosphate: step 1/1. It functions in the pathway bacterial outer membrane biogenesis; LPS lipid A biosynthesis. In terms of biological role, catalyzes the last two sequential reactions in the de novo biosynthetic pathway for UDP-N-acetylglucosamine (UDP-GlcNAc). The C-terminal domain catalyzes the transfer of acetyl group from acetyl coenzyme A to glucosamine-1-phosphate (GlcN-1-P) to produce N-acetylglucosamine-1-phosphate (GlcNAc-1-P), which is converted into UDP-GlcNAc by the transfer of uridine 5-monophosphate (from uridine 5-triphosphate), a reaction catalyzed by the N-terminal domain. The polypeptide is Bifunctional protein GlmU (Geobacter metallireducens (strain ATCC 53774 / DSM 7210 / GS-15)).